We begin with the raw amino-acid sequence, 197 residues long: Protein shisa-4 (197 aa).

An N-terminal signal peptide occupies residues 1 to 27; sequence MPPAGPRGTAPLAAVVLLVLGAPLALA. At 28 to 87 the chain is on the extracellular side; sequence SEDCLWYLDRNGSWHPGFDCEFFTFCCGTCYQRYCCRDLTLLITERQQKHCLAFSPKTIA. Residues 88–108 form a helical membrane-spanning segment; the sequence is GIASAVILFVAVVATTICCFL. The Cytoplasmic portion of the chain corresponds to 109-197; sequence CSCCYLYRRR…MPPQPSYPGA (89 aa).

The protein belongs to the shisa family.

It localises to the membrane. The sequence is that of Protein shisa-4 (Shisa4) from Mus musculus (Mouse).